Reading from the N-terminus, the 282-residue chain is Cytochrome c1 (282 aa).

The first 24 residues, 1–24 (MTIKLRFVASLALVFGLAAASVPA), serve as a signal peptide directing secretion. Residues Cys-62, Cys-65, His-66, and Met-207 each contribute to the heme c site. The chain crosses the membrane as a helical span at residues 253-273 (WWVLGFLVIFTGLLVATKIVV).

The main subunits of complex b-c1 are: cytochrome b, cytochrome c1 and the Rieske protein. Post-translationally, binds 1 heme c group covalently per subunit.

The protein resides in the cell membrane. In terms of biological role, component of the ubiquinol-cytochrome c reductase complex (complex III or cytochrome b-c1 complex), which is a respiratory chain that generates an electrochemical potential coupled to ATP synthesis. c1 functions as an electron donor to cytochrome c. The chain is Cytochrome c1 (petC) from Blastochloris viridis (Rhodopseudomonas viridis).